A 328-amino-acid chain; its full sequence is GTP 3',8-cyclase (328 aa).

Positions 1 to 229 constitute a Radical SAM core domain; sequence MNTVDYLRIS…ESFVPGNGPA (229 aa). Arg-8 is a binding site for GTP. Residues Cys-15 and Cys-19 each contribute to the [4Fe-4S] cluster site. Tyr-21 contributes to the S-adenosyl-L-methionine binding site. Residue Cys-22 coordinates [4Fe-4S] cluster. Arg-60 is a GTP binding site. Gly-64 provides a ligand contact to S-adenosyl-L-methionine. Thr-91 lines the GTP pocket. Ser-115 lines the S-adenosyl-L-methionine pocket. Lys-155 is a binding site for GTP. Met-189 lines the S-adenosyl-L-methionine pocket. 2 residues coordinate [4Fe-4S] cluster: Cys-252 and Cys-255. 257–259 contacts GTP; that stretch reads RMR. Cys-269 serves as a coordination point for [4Fe-4S] cluster.

The protein belongs to the radical SAM superfamily. MoaA family. Monomer and homodimer. It depends on [4Fe-4S] cluster as a cofactor.

It carries out the reaction GTP + AH2 + S-adenosyl-L-methionine = (8S)-3',8-cyclo-7,8-dihydroguanosine 5'-triphosphate + 5'-deoxyadenosine + L-methionine + A + H(+). It functions in the pathway cofactor biosynthesis; molybdopterin biosynthesis. In terms of biological role, catalyzes the cyclization of GTP to (8S)-3',8-cyclo-7,8-dihydroguanosine 5'-triphosphate. The sequence is that of GTP 3',8-cyclase from Trichodesmium erythraeum (strain IMS101).